The following is a 135-amino-acid chain: UPF0299 membrane protein YPK_2559 (135 aa).

3 consecutive transmembrane segments (helical) span residues 30 to 50 (LLLP…FVLL), 66 to 86 (LLIR…MQYY), and 93 to 113 (FGPI…VVAY).

It belongs to the UPF0299 family.

The protein localises to the cell inner membrane. This Yersinia pseudotuberculosis serotype O:3 (strain YPIII) protein is UPF0299 membrane protein YPK_2559.